A 178-amino-acid polypeptide reads, in one-letter code: MKNLPNYLTIARIMVIPVIILLFYINNSLARKLGALLFVLASITDFFDGYIARKYNLVTSFGKMFDPIADKLLVGCVTIMLLKKDNVDEIPCLLILAREFLVSGLREFLALVKVSVPVSRLAKLKTFLQMFALSILILGSKGSGIIYLDIVGEIILWIAAFLTIITGYSYFKACKTYF.

4 helical membrane passes run 5–25 (PNYL…LFYI), 32–52 (KLGA…GYIA), 61–81 (FGKM…TIML), and 145–165 (IIYL…LTII).

Belongs to the CDP-alcohol phosphatidyltransferase class-I family.

It localises to the cell membrane. It catalyses the reaction a CDP-1,2-diacyl-sn-glycerol + sn-glycerol 3-phosphate = a 1,2-diacyl-sn-glycero-3-phospho-(1'-sn-glycero-3'-phosphate) + CMP + H(+). It participates in phospholipid metabolism; phosphatidylglycerol biosynthesis; phosphatidylglycerol from CDP-diacylglycerol: step 1/2. Its function is as follows. This protein catalyzes the committed step to the synthesis of the acidic phospholipids. The chain is CDP-diacylglycerol--glycerol-3-phosphate 3-phosphatidyltransferase (pgsA) from Rickettsia typhi (strain ATCC VR-144 / Wilmington).